We begin with the raw amino-acid sequence, 152 residues long: 3-hydroxyacyl-[acyl-carrier-protein] dehydratase FabZ (152 aa).

Residue H57 is part of the active site.

Belongs to the thioester dehydratase family. FabZ subfamily.

The protein resides in the cytoplasm. It catalyses the reaction a (3R)-hydroxyacyl-[ACP] = a (2E)-enoyl-[ACP] + H2O. Involved in unsaturated fatty acids biosynthesis. Catalyzes the dehydration of short chain beta-hydroxyacyl-ACPs and long chain saturated and unsaturated beta-hydroxyacyl-ACPs. The sequence is that of 3-hydroxyacyl-[acyl-carrier-protein] dehydratase FabZ from Pasteurella multocida (strain Pm70).